Consider the following 645-residue polypeptide: DNA mismatch repair protein MutL (645 aa).

The segment at 371 to 403 (VHDQKDKNHDVESHKNNLDSTSSTNNESTEVSN) is disordered. The span at 372-387 (HDQKDKNHDVESHKNN) shows a compositional bias: basic and acidic residues. Residues 390–402 (STSSTNNESTEVS) are compositionally biased toward low complexity.

This sequence belongs to the DNA mismatch repair MutL/HexB family.

Its function is as follows. This protein is involved in the repair of mismatches in DNA. It is required for dam-dependent methyl-directed DNA mismatch repair. May act as a 'molecular matchmaker', a protein that promotes the formation of a stable complex between two or more DNA-binding proteins in an ATP-dependent manner without itself being part of a final effector complex. The chain is DNA mismatch repair protein MutL from Staphylococcus epidermidis (strain ATCC 35984 / DSM 28319 / BCRC 17069 / CCUG 31568 / BM 3577 / RP62A).